The primary structure comprises 154 residues: 6,7-dimethyl-8-ribityllumazine synthase (154 aa).

Residues Phe22, 56–58 (AFE), and 80–82 (AVI) contribute to the 5-amino-6-(D-ribitylamino)uracil site. 85–86 (AT) lines the (2S)-2-hydroxy-3-oxobutyl phosphate pocket. The active-site Proton donor is His88. Phe113 contacts 5-amino-6-(D-ribitylamino)uracil. Arg127 is a binding site for (2S)-2-hydroxy-3-oxobutyl phosphate.

The protein belongs to the DMRL synthase family. In terms of assembly, forms an icosahedral capsid composed of 60 subunits, arranged as a dodecamer of pentamers.

It catalyses the reaction (2S)-2-hydroxy-3-oxobutyl phosphate + 5-amino-6-(D-ribitylamino)uracil = 6,7-dimethyl-8-(1-D-ribityl)lumazine + phosphate + 2 H2O + H(+). It participates in cofactor biosynthesis; riboflavin biosynthesis; riboflavin from 2-hydroxy-3-oxobutyl phosphate and 5-amino-6-(D-ribitylamino)uracil: step 1/2. Its function is as follows. Catalyzes the formation of 6,7-dimethyl-8-ribityllumazine by condensation of 5-amino-6-(D-ribitylamino)uracil with 3,4-dihydroxy-2-butanone 4-phosphate. This is the penultimate step in the biosynthesis of riboflavin. The chain is 6,7-dimethyl-8-ribityllumazine synthase from Geobacillus kaustophilus (strain HTA426).